Reading from the N-terminus, the 400-residue chain is MSNQEFAQRWQGVMIDSYGTPGLSFVRGEGSTLWDADGTAYTDFVSGLAVNALGHAHPAVVGAVSRQIASLGHISNFYSAEPTITLAERLIELFGRPGRVFFCNSGAEANETAFKIGRLTGRSRIVAAQSGFHGRTMGSLALTGQPAKREPFLPLPGDVTHVPYGDAEALRAAVTEDTAMVILEPIQGESGVVVPPKGYLRAAREITEATGTLLVLDEVQTGIGRTGHWFAAQAEGVEADVVTLAKGLGGGLPLGAAVAFGRAAELMTPGHHASTFGGNPVSCARTRVLDTIAADGLLDRVKQLGSAPDEWSVRDAAAIRWSPMSGAGLMLGIVLNEPLAPQVQLAAQKAGFLVNVPAPDVVRLIPPLVIEETEVDAFLQALPGLLDAVHERDREGQTGE.

Pyridoxal 5'-phosphate contacts are provided by residues 106–107 (GA) and Phe132. Arg135 is a binding site for N(2)-acetyl-L-ornithine. Residue 217-220 (DEVQ) participates in pyridoxal 5'-phosphate binding. Lys246 bears the N6-(pyridoxal phosphate)lysine mark. Ser274 provides a ligand contact to N(2)-acetyl-L-ornithine. Pyridoxal 5'-phosphate is bound at residue Thr275.

The protein belongs to the class-III pyridoxal-phosphate-dependent aminotransferase family. ArgD subfamily. In terms of assembly, homodimer. It depends on pyridoxal 5'-phosphate as a cofactor.

It is found in the cytoplasm. The catalysed reaction is N(2)-acetyl-L-ornithine + 2-oxoglutarate = N-acetyl-L-glutamate 5-semialdehyde + L-glutamate. It functions in the pathway amino-acid biosynthesis; L-arginine biosynthesis; N(2)-acetyl-L-ornithine from L-glutamate: step 4/4. This Streptomyces clavuligerus protein is Acetylornithine aminotransferase.